The sequence spans 194 residues: Peptidyl-tRNA hydrolase (194 aa).

Tyr-17 provides a ligand contact to tRNA. Residue His-22 is the Proton acceptor of the active site. TRNA contacts are provided by Phe-68, Asn-70, and Asn-116.

Belongs to the PTH family. In terms of assembly, monomer.

The protein localises to the cytoplasm. The enzyme catalyses an N-acyl-L-alpha-aminoacyl-tRNA + H2O = an N-acyl-L-amino acid + a tRNA + H(+). In terms of biological role, hydrolyzes ribosome-free peptidyl-tRNAs (with 1 or more amino acids incorporated), which drop off the ribosome during protein synthesis, or as a result of ribosome stalling. Functionally, catalyzes the release of premature peptidyl moieties from peptidyl-tRNA molecules trapped in stalled 50S ribosomal subunits, and thus maintains levels of free tRNAs and 50S ribosomes. In Haemophilus influenzae (strain 86-028NP), this protein is Peptidyl-tRNA hydrolase.